A 563-amino-acid chain; its full sequence is Arginine--tRNA ligase (563 aa).

Positions 120–130 match the 'HIGH' region motif; that stretch reads PNIAKPFHIGH.

This sequence belongs to the class-I aminoacyl-tRNA synthetase family. In terms of assembly, monomer.

It is found in the cytoplasm. It catalyses the reaction tRNA(Arg) + L-arginine + ATP = L-arginyl-tRNA(Arg) + AMP + diphosphate. The sequence is that of Arginine--tRNA ligase from Clostridium botulinum (strain Loch Maree / Type A3).